The sequence spans 37 residues: NAD-reducing hydrogenase HoxS subunit alpha (37 aa).

The protein belongs to the complex I 51 kDa subunit family. As to quaternary structure, tetramer of an alpha and a gamma subunits (flavin-containing dimer), and a delta and a nickel-containing beta subunits (hydrogenase dimer). FMN is required as a cofactor. The cofactor is [4Fe-4S] cluster.

It is found in the cytoplasm. It carries out the reaction H2 + NAD(+) = NADH + H(+). Functionally, subunits alpha and gamma of HoxS constitute an NADH--oxidoreductase. The polypeptide is NAD-reducing hydrogenase HoxS subunit alpha (hoxF) (Rhodococcus opacus (Nocardia opaca)).